A 226-amino-acid chain; its full sequence is Ribose-5-phosphate isomerase A (226 aa).

Residues 28-31 (TGST), 80-83 (DGAD), and 93-96 (KGGG) each bind substrate. The Proton acceptor role is filled by Glu-102. Lys-120 lines the substrate pocket.

Belongs to the ribose 5-phosphate isomerase family. Homodimer.

It catalyses the reaction aldehydo-D-ribose 5-phosphate = D-ribulose 5-phosphate. It participates in carbohydrate degradation; pentose phosphate pathway; D-ribose 5-phosphate from D-ribulose 5-phosphate (non-oxidative stage): step 1/1. In terms of biological role, catalyzes the reversible conversion of ribose-5-phosphate to ribulose 5-phosphate. In Caulobacter sp. (strain K31), this protein is Ribose-5-phosphate isomerase A.